Here is a 647-residue protein sequence, read N- to C-terminus: Threonine--tRNA ligase (647 aa).

The TGS domain occupies 1–61 (MIKITFPDGA…EEDGSIEIVT (61 aa)). The interval 240-538 (DHRKLGKELD…LIETYKGAFP (299 aa)) is catalytic. Residues cysteine 334, histidine 385, and histidine 515 each contribute to the Zn(2+) site.

It belongs to the class-II aminoacyl-tRNA synthetase family. In terms of assembly, homodimer. Requires Zn(2+) as cofactor.

Its subcellular location is the cytoplasm. It carries out the reaction tRNA(Thr) + L-threonine + ATP = L-threonyl-tRNA(Thr) + AMP + diphosphate + H(+). In terms of biological role, catalyzes the attachment of threonine to tRNA(Thr) in a two-step reaction: L-threonine is first activated by ATP to form Thr-AMP and then transferred to the acceptor end of tRNA(Thr). Also edits incorrectly charged L-seryl-tRNA(Thr). This is Threonine--tRNA ligase from Streptococcus pyogenes serotype M1.